The following is a 166-amino-acid chain: Orofacial cleft 1 candidate gene 1 protein homolog (166 aa).

Residues Met1–Ala22 are disordered.

The chain is Orofacial cleft 1 candidate gene 1 protein homolog (Ofcc1) from Mus musculus (Mouse).